Reading from the N-terminus, the 392-residue chain is MRLLTVVLLLPLLIICHEHSHHHHDDEGSAVLTKVGLDDHELHEHDHDHDHDHKILRWDEKKNHSSHEKVPHSQLSTLKVWVFSLSAVIGISLAPCTLLFFIPAQHANGPFLKILLAFGAGGLLGDALLHIIPHSLNPHSHGAHDHDHAHSHDHAHNDHSHDHSDQLRVGIYVIAGILVFMMVEQLVRIIKGGHCHSHENGHIVADEHRHLNDDHHHHHNGEKKQEVEGLKDIKASAYLNLVADFVHNMTDGLAIGASFSAGSTLGWVTTLTVLLHELPHEVGDFAILVQSGFSKYQAIRMQAVTALGAITGCIFSLLISNPVLSAEGDTGAIMPFTAGGFIYIATVSVIPELLESGDHNNMSKVAKMAQSLVHLIAICMGVGMMYIVSLVE.

N-linked (GlcNAc...) asparagine glycosylation occurs at asparagine 63. The next 2 membrane-spanning stretches (helical) occupy residues 82-102 and 114-134; these read VFSL…LFFI and ILLA…IIPH. The interval 139–162 is disordered; the sequence is HSHGAHDHDHAHSHDHAHNDHSHD. Over residues 142-162 the composition is skewed to basic and acidic residues; sequence GAHDHDHAHSHDHAHNDHSHD. The helical transmembrane segment at 170–190 threads the bilayer; sequence GIYVIAGILVFMMVEQLVRII. An N-linked (GlcNAc...) asparagine glycan is attached at asparagine 248. 3 consecutive transmembrane segments (helical) span residues 255-275, 304-324, and 331-351; these read IGAS…TVLL, VTAL…NPVL, and GAIM…SVIP. Asparagine 361 carries an N-linked (GlcNAc...) asparagine glycan. The helical transmembrane segment at 371 to 391 threads the bilayer; the sequence is SLVHLIAICMGVGMMYIVSLV.

The protein belongs to the ZIP transporter (TC 2.A.5) family. KE4/Catsup subfamily.

It localises to the membrane. Its function is as follows. Zinc transporter which regulates intracellular zinc levels. Required for spermatogenesis in both hermaphrodites and males where it resides in an inactive form in immature sperm, spermatids, but is likely activated in response to reduced spe-4 and spe-6 function. Upon activation, mediates the release of zinc from internal stores in spermatids into the cytoplasm. The resulting increase in cytoplasmic zinc levels promotes spermatid activation and subsequent differentiation into mature motile sperm that are capable of fertilization. In Caenorhabditis briggsae, this protein is Zinc transporter zipt-7.1.